Reading from the N-terminus, the 314-residue chain is Putative glycosyltransferase ORF31 (314 aa).

This sequence belongs to the glycosyltransferase group 1 family.

The protein is Putative glycosyltransferase ORF31 of Haloarcula hispanica (His1V).